A 61-amino-acid chain; its full sequence is Large ribosomal subunit protein bL32 (61 aa).

Belongs to the bacterial ribosomal protein bL32 family.

The chain is Large ribosomal subunit protein bL32 from Syntrophus aciditrophicus (strain SB).